Here is a 134-residue protein sequence, read N- to C-terminus: Interleukin-5 (134 aa).

An N-terminal signal peptide occupies residues 1 to 19; it reads MRMLLHLSLLALGAAYVYA. T22 is a glycosylation site (O-linked (GalNAc...) threonine). N47 and N90 each carry an N-linked (GlcNAc...) asparagine glycan.

Belongs to the IL-5 family. Homodimer; disulfide-linked. Interacts with IL5RA. Interacts with CSF2RB.

It is found in the secreted. Homodimeric cytokine expressed predominantly by T-lymphocytes and NK cells that plays an important role in the survival, differentiation, and chemotaxis of eosinophils. Also acts on activated and resting B-cells to induce immunoglobulin production, growth, and differentiation. Mechanistically, exerts its biological effects through a receptor composed of IL5RA subunit and the cytokine receptor common subunit beta/CSF2RB. Binding to the receptor leads to activation of various kinases including LYN, SYK and JAK2 and thereby propagates signals through the RAS-MAPK and JAK-STAT5 pathways respectively. This Macaca mulatta (Rhesus macaque) protein is Interleukin-5 (IL5).